Consider the following 895-residue polypeptide: Zinc finger protein 281 (895 aa).

2 disordered regions span residues 1–44 (MKIG…EMEP) and 63–113 (FTRP…AFPS). A Glycyl lysine isopeptide (Lys-Gly) (interchain with G-Cter in SUMO2) cross-link involves residue Lys-2. Residues 7 to 36 (FLSGGGGTGSSGGSGSGGGGSGGGGGGGSS) show a composition bias toward gly residues. Residues Arg-65, Lys-101, and Lys-128 each participate in a glycyl lysine isopeptide (Lys-Gly) (interchain with G-Cter in SUMO2) cross-link. Basic and acidic residues-rich tracts occupy residues 130-140 (EKPADPEEQQS) and 202-218 (RTDD…DTNV). Disordered regions lie at residues 130–149 (EKPA…HHHY) and 183–253 (HVQQ…EGAI). Glycyl lysine isopeptide (Lys-Gly) (interchain with G-Cter in SUMO2) cross-links involve residues Lys-213, Lys-219, Lys-225, Lys-232, Lys-242, and Lys-259. 3 consecutive C2H2-type zinc fingers follow at residues 261 to 283 (HICD…VLIH), 289 to 311 (FQCS…EKIH), and 317 to 339 (FGCD…KRTH). Glycyl lysine isopeptide (Lys-Gly) (interchain with G-Cter in SUMO2) cross-links involve residues Lys-301 and Lys-325. A C2H2-type 4; atypical zinc finger spans residues 345–367 (YKCDTCQQYFSRTDRLLKHRRTC). Lys-373 is covalently cross-linked (Glycyl lysine isopeptide (Lys-Gly) (interchain with G-Cter in SUMO2)). Residues 377–427 (SAEPGSSNHTNMGNLAVLSQGNTSSSRRKTKSKSIAIENKEQKTGKTNESQ) are disordered. Residues 379-398 (EPGSSNHTNMGNLAVLSQGN) show a composition bias toward polar residues. At Ser-395 the chain carries Phosphoserine. Residues Lys-409, Lys-416, Lys-460, and Lys-477 each participate in a glycyl lysine isopeptide (Lys-Gly) (interchain with G-Cter in SUMO2) cross-link. The residue at position 484 (Ser-484) is a Phosphoserine. Residues Lys-493, Lys-498, Lys-539, Lys-599, Lys-617, and Lys-622 each participate in a glycyl lysine isopeptide (Lys-Gly) (interchain with G-Cter in SUMO2) cross-link. The disordered stretch occupies residues 638-660 (SGEHSELVQEENLSPGTQTPSND). Positions 648-660 (ENLSPGTQTPSND) are enriched in polar residues. Position 651 is a phosphoserine (Ser-651). Glycyl lysine isopeptide (Lys-Gly) (interchain with G-Cter in SUMO2) cross-links involve residues Lys-661 and Lys-670. The segment covering 778–789 (SSAFQSSSQKLT) has biased composition (polar residues). A disordered region spans residues 778-817 (SSAFQSSSQKLTSQKEQKNLESSTGFQIPSQELASQIDPQ). Ser-785 is modified (phosphoserine). Glycyl lysine isopeptide (Lys-Gly) (interchain with G-Cter in SUMO2) cross-links involve residues Lys-787, Lys-792, and Lys-795. Over residues 797–815 (LESSTGFQIPSQELASQID) the composition is skewed to polar residues. Ser-807 carries the post-translational modification Phosphoserine. Glycyl lysine isopeptide (Lys-Gly) (interchain with G-Cter in SUMO2) cross-links involve residues Lys-818 and Lys-840. Thr-888 is modified (phosphothreonine).

The protein belongs to the krueppel C2H2-type zinc-finger protein family.

It localises to the nucleus. Its function is as follows. Transcription repressor that plays a role in regulation of embryonic stem cells (ESCs) differentiation. Required for ESCs differentiation and acts by mediating autorepression of NANOG in ESCs: binds to the NANOG promoter and promotes association of NANOG protein to its own promoter and recruits the NuRD complex, which deacetylates histones. Not required for establishement and maintenance of ESCs. Represses the transcription of a number of genes including GAST, ODC1 and VIM. Binds to the G-rich box in the enhancer region of these genes. The protein is Zinc finger protein 281 (ZNF281) of Homo sapiens (Human).